A 677-amino-acid polypeptide reads, in one-letter code: Secretogranin-1 (677 aa).

The N-terminal stretch at 1–20 (MQPTLLLSLLGAVGLAAVNS) is a signal peptide. Residues Cys36 and Cys57 are joined by a disulfide bond. 2 stretches are compositionally biased toward basic and acidic residues: residues 64 to 100 (SRKDVKDKETTENENTKFEVRLLRDPADASEAHESSS) and 118 to 136 (ADTEKWAEGGGHSRERADE). A disordered region spans residues 64 to 463 (SRKDVKDKET…DKARRHPQGA (400 aa)). Thr79 carries the phosphothreonine modification. Phosphoserine occurs at positions 93, 99, and 100. Ser93 carries an O-linked (Xyl...) (chondroitin sulfate) serine glycan. Positions 116–120 (TKADT) are O-glycosylated at one site. A Phosphoserine; by FAM20C modification is found at Ser130. The residue at position 149 (Ser149) is a Phosphoserine. 3 stretches are compositionally biased toward basic and acidic residues: residues 150 to 162 (EEVKTRHSEKSQR), 172 to 190 (NYQKGERGEDSSEEKHLEE), and 200 to 236 (NERKQASAIKKEELVARSETHAAGHSQEKTHSREKSS). A Phosphoserine modification is found at Ser183. The residue at position 225 (Ser225) is a Phosphoserine; by FAM20C. Ser239 is a glycosylation site (O-linked (Xyl...) (chondroitin sulfate) serine). Phosphoserine is present on residues Ser259 and Ser263. Acidic residues predominate over residues 262-272 (ESEEGEEDATS). Over residues 277–287 (RRTRPRHHHGR) the composition is skewed to basic residues. Ser293, Ser294, Ser311, and Ser335 each carry phosphoserine. The residue at position 341 (Tyr341) is a Sulfotyrosine. Positions 359 to 372 (WERYRGRGSEEYRA) are enriched in basic and acidic residues. Phosphoserine; by FAM20C is present on residues Ser367, Ser377, and Ser380. Composition is skewed to basic and acidic residues over residues 384 to 415 (EDKRNYPSLELDKMAHGYGEESEEERGLEPGK) and 433 to 455 (DTREEKRFLGEGHHRVQENQMDK). Residue Tyr401 is modified to Phosphotyrosine. Ser405 is modified (phosphoserine). Tyr474 carries the sulfotyrosine modification. A disordered region spans residues 475 to 512 (GEEGAPGKWQQQGDLQDTKENREEARFQDKQYSSHHTA). Positions 490-503 (QDTKENREEARFQD) are enriched in basic and acidic residues. 2 positions are modified to phosphoserine: Ser533 and Ser534. Residue Tyr566 is modified to Sulfotyrosine. Ser617 is modified (phosphoserine). The tract at residues 622–653 (DFYDSEEPVSTHQEAENEKDRADQTVLTEDEK) is disordered. Sulfotyrosine is present on Tyr624. Phosphoserine is present on residues Ser626 and Ser631. Residues 634–653 (QEAENEKDRADQTVLTEDEK) are compositionally biased toward basic and acidic residues.

This sequence belongs to the chromogranin/secretogranin protein family. Interacts with ITPR1 in the secretory granules. Post-translationally, extensively processed by limited proteolysis at conserved basic residues. Alternative processing are seen in different tissues. In terms of processing, O-glycosylated. As to expression, detected in cerebrospinal fluid and urine (at protein level). Expressed in the adrenal medulla, and in pheochromocytoma. Not expressed in liver.

The protein resides in the secreted. Its function is as follows. Secretogranin-1 is a neuroendocrine secretory granule protein, which may be the precursor for other biologically active peptides. In Homo sapiens (Human), this protein is Secretogranin-1 (CHGB).